Consider the following 235-residue polypeptide: Large ribosomal subunit protein uL1 (235 aa).

Belongs to the universal ribosomal protein uL1 family. As to quaternary structure, part of the 50S ribosomal subunit.

Binds directly to 23S rRNA. The L1 stalk is quite mobile in the ribosome, and is involved in E site tRNA release. In terms of biological role, protein L1 is also a translational repressor protein, it controls the translation of the L11 operon by binding to its mRNA. The sequence is that of Large ribosomal subunit protein uL1 from Lawsonia intracellularis (strain PHE/MN1-00).